Reading from the N-terminus, the 408-residue chain is uncharacterized protein (408 aa).

A disordered region spans residues 49-77 (PRSSPEVQRKATAGENSEVGSPESSLSTS). The segment covering 62–77 (GENSEVGSPESSLSTS) has biased composition (polar residues). The 47-residue stretch at 124–170 (SFEFMQLPDTDICQIMSFLDAQSLLNLSQTCSHLRQLCLAHEDNAGK) folds into the F-box domain.

This is an uncharacterized protein from Caenorhabditis elegans.